Here is a 273-residue protein sequence, read N- to C-terminus: Inactive endochitinase At2g43600 (273 aa).

The signal sequence occupies residues 1–22 (MTIKNVIFSLFILAILAETVFS). A Chitin-binding type-1 domain is found at 23-61 (QNCMDTSCPGLKECCSRWGFCGTKDEYCGFFCFSGPCNI). Intrachain disulfides connect C25/C37, C30/C43, C36/C50, and C54/C59. Positions 78-273 (GKIETVITSA…GVTPDQGLDC (196 aa)) are catalytic. A glycan (N-linked (GlcNAc...) asparagine) is linked at N99.

Belongs to the glycosyl hydrolase 19 family. Chitinase class I subfamily.

The chain is Inactive endochitinase At2g43600 from Arabidopsis thaliana (Mouse-ear cress).